Here is a 110-residue protein sequence, read N- to C-terminus: UPF0060 membrane protein Haur_1798 (110 aa).

4 helical membrane passes run 7-27 (VVLF…VWQW), 33-53 (SIWF…LPTL), 63-83 (VYAA…WLID), and 89-109 (QPSL…LYWP).

The protein belongs to the UPF0060 family.

Its subcellular location is the cell membrane. The polypeptide is UPF0060 membrane protein Haur_1798 (Herpetosiphon aurantiacus (strain ATCC 23779 / DSM 785 / 114-95)).